The primary structure comprises 1658 residues: MLSVLWVLISWINISGPIPNISGSLTLFGLYYGFLAALPIGLSQILTIRAFLLGGNTGGTLAVSGSIMGQLITNLSIYYWPIYVMLLKPHAITLLVLPYMLFYWYRTKDLLYDQPPNPVESLNDAQVRQIFLDSFILSLLNPVILPSPVFARSLNLFIFRYSNKISFVISSSFGWLGGYILFINLIKLLMVRIERDSSVNYPLIKSIINQIFSIIILALRLLYLGRAPVPLFTKKIHDGFESDENQIVKSLWLNKPWPTVLFDYRKWNRPFRYIQNGPNGDSPVKKQVSQYFFDTCSSDGRQRISFTSLPSSSTFQKDLKEYLNISEISPSSEDIYDKWIHIEEKRKNNSNDGLTNRVQALDNRFLMINVTEYRNELCDHKENVSIKTYDPFLNKGFRGKIAISESPWIFDEKPLESTRRQIMLNISKRNNKLKDWIYICWQGLERKKLSLPWEPLTPDAFNSFNLIAKEVSNDEEPRTDLKQVDFYEEQTLVTLDEQNISSELFATVTEHTNDLHERTTTKSSINWEHVLNLSSKKRDYYSRYLENIKWHKLLNYWKKLFLDSSTKVRDTLFLITQAFGIRNEYQVQDVVKEMPRWTSKLANYKFDVIGITFSDVRYRKLKNFDYVFETVDQEIEIETNEPFRIVKRFSQQSDFRRNLVIGSMRARRRKTLIWNSLQLKTHSPFFLRIMDETTPLKIPLKVSNKIDTKSTFTPFTKIKQGLIPFFSDSDDEKVFAAEKTELDRLTIANKWDFASAHWGRGFPLVIQSYLRKYVVIPVLIISKNISRILLFQVPEWKEDWNEWSKEIHVKCNYDGTEVSVHQLPSLWHREGLQIKILYPFHLKPWHNSKLRQLEFLDNLDIKNFGDGDEIEKTLLYDGIKDSYTSAERKKIDYSYLTIWGNQTDSPFGNTKKQPFFWKPVIKELRKKRKRILSKITQNFKIYYKFFPLGQKSNIYNESDVPAVSKTRADKSKNNDIFEFEPDDKDKNEERDFKINNEIFDELPIGITPKSSNNLSLQNSNKIEYGTGVFTRESGNDVTPNSNEIERITKHFFDEVQTNTDSKVISDEYPNDGKKLKLRKILIKFYQQIIRLRRKSTQLIHERINSINIFSEEINRNVLKNIFYLIRFKIKLMINFVKNIFINCNEVIHSYNNIFRLQTKYDKYVNQDLIVSGKEGQDPEFNSDQGIDSVSQADVFHGVRQSKTINKSYLKNFLKYWNLYYFIGENYEKKLKVILDEKGILGVGEPQNLSEENWKDWLRCLHRCKLPSHIWCKIVPRTWKNEVTKHWKMEENFPNHFDEDIPHTFMTYSSWERIGKLNRRHKYNLLSYSYLDFAKNREIKKFPMWQSEGEQTIFNNRIREIRECQSVNNEENDKSKIYFEFKMKLWLFPELMKAKKVFGSEVILIPEISLIAEKHNKSLKDERLLEDRECHESIYQWRRTSKELERIVKKLRDIAFLTIIIENQDKFVSLPANIVENLEALVFSTRGDSVKETFQNLEFRLPRVLDDQILMYKTISTLLKFKNRFKRRLDLNTFDESIPRIEIVKNGGKTISSSYFNLEDILLPKRRMELRILNSPDLKGDENRDAELDRGTFGIKRQSYEQLIEEDRDSANKNQIIKRFLRPSYRLEDPACMNRFWFHTNNGSRFAMLRICMYPSIHD.

Transmembrane regions (helical) follow at residues 28–48, 52–72, 82–102, 130–150, 165–185, and 199–219; these read FGLY…ILTI, LLGG…GQLI, IYVM…YMLF, IFLD…SPVF, ISFV…FINL, and VNYP…ILAL.

This sequence belongs to the TIC214 family. As to quaternary structure, part of the Tic complex.

It is found in the plastid. It localises to the chloroplast inner membrane. Functionally, involved in protein precursor import into chloroplasts. May be part of an intermediate translocation complex acting as a protein-conducting channel at the inner envelope. The sequence is that of Protein TIC 214 from Huperzia lucidula (Shining clubmoss).